Consider the following 384-residue polypeptide: MSSTAGQVINCKAAVAWSAKAPLSIETIQVAPPKAHEVRVKILYTAVCHTDAYTLDGHDPEGLFPVVLGHEGSGIVESVGEGVTGFAPGDHVVPLYVPQCKECEYCKNPKTNLCQKIRISQGNGFMPDGSSRFTCNGKQLFHFMGCSTFSEYTVVADISLCKVNPEAPLEKVSLLGCGISTGYGAVLNTCKVEEGSTVAVWGLGAVGLAVIMGAKAAGAKKIVGIDLIESKFESAKFFGATECINPKSVELPEGKSFQAWLVEQFDGGFDYTFECIGNVHTMRQALEAAHKGWGVSCIIGVAGAGQEIATRPFQLVTGRTWKGTAFGGWKSVESVPRLVDDYMNKKLLIDEFITHRWNIDDINTAFDVLHKGESLRSVLAFEKI.

The Zn(2+) site is built by Cys48, His70, Cys100, Cys103, Cys106, Cys114, and Cys177.

It belongs to the zinc-containing alcohol dehydrogenase family. Class-III subfamily. As to quaternary structure, homodimer. Requires Zn(2+) as cofactor.

It is found in the cytoplasm. The catalysed reaction is a primary alcohol + NAD(+) = an aldehyde + NADH + H(+). It carries out the reaction a secondary alcohol + NAD(+) = a ketone + NADH + H(+). It catalyses the reaction S-(hydroxymethyl)glutathione + NADP(+) = S-formylglutathione + NADPH + H(+). The enzyme catalyses S-(hydroxymethyl)glutathione + NAD(+) = S-formylglutathione + NADH + H(+). In terms of biological role, class-III ADH is remarkably ineffective in oxidizing ethanol, but it readily catalyzes the oxidation of long-chain primary alcohols and the oxidation of S-(hydroxymethyl) glutathione. Plays a role in the calcium flux to the cytoplasm in the ASJ sensory neurons upon removal of a nitric oxide stimulus. The polypeptide is Alcohol dehydrogenase class-3 (Caenorhabditis elegans).